The following is a 132-amino-acid chain: U-scoloptoxin(05)-Er3a (132 aa).

An N-terminal signal peptide occupies residues 1–19 (MRSWFVFVALLAVVFLPSS).

This sequence belongs to the scoloptoxin-05 family. Post-translationally, contains 5 disulfide bonds. In terms of tissue distribution, expressed by the venom gland.

It localises to the secreted. The protein is U-scoloptoxin(05)-Er3a of Ethmostigmus rubripes (Giant centipede).